Here is a 392-residue protein sequence, read N- to C-terminus: Ceramide phosphoethanolamine synthase (392 aa).

Topologically, residues 1–10 (MIGPSSQISK) are lumenal. The chain crosses the membrane as a helical span at residues 11 to 31 (ILLTLLFLLIIFYVFMDVELY). The Cytoplasmic portion of the chain corresponds to 32–140 (LRIHNYAIER…MFDNVIGFSR (109 aa)). Residues 59-82 (SESGSGSIGGSSSSSSSSSSSTST) show a composition bias toward low complexity. Residues 59-91 (SESGSGSIGGSSSSSSSSSSSTSTKLPTAGDRQ) form a disordered region. A helical transmembrane segment spans residues 141–161 (STFITPNMISFFHVGVACLAG). Residues 162 to 212 (KLVASDSLGYRRLGVLLFQIRTFLDDLDGHVARVRKHIRGERSEIGTSGYY) lie on the Lumenal side of the membrane. A helical transmembrane segment spans residues 213–233 (VDGLCDGLGCIALLLGIFFYL). Topologically, residues 234 to 271 (KNNPPRRGYSIIPMSDSKLPEPTMMIPKMKATTRKVAK) are cytoplasmic. Residues 272 to 288 (NVISFTGQLLLSSTAWN) traverse the membrane as a helical segment. At 289 to 319 (RYIAVYQNMLEREDVSGNQSHCQDYVFKSTW) the chain is on the lumenal side. Residues 320–340 (FFCVAWMWRIVNVHALLHCVL) form a helical membrane-spanning segment. The Cytoplasmic segment spans residues 341–356 (LSIFCDKLWDFLRAIR). Residues 357–377 (YSGYIILLVAICLTEMHILEA) form a helical membrane-spanning segment. Residues 378 to 392 (QNYIFNSTACSNISL) lie on the Lumenal side of the membrane.

Belongs to the CDP-alcohol phosphatidyltransferase class-I family. Mn(2+) serves as cofactor.

It is found in the membrane. Its subcellular location is the golgi apparatus membrane. The protein resides in the cell membrane. It catalyses the reaction CDP-ethanolamine + an N-acylsphing-4-enine = an N-acylsphing-4-enine 1-phosphoethanolamine + CMP + H(+). The enzyme catalyses CDP-ethanolamine + an N-acyl-sphingoid base = an N-acyl-sphingoid 1-phosphoethanolamine + CMP + H(+). Functionally, catalyzes the biosynthesis of ceramide phosphoethanolamine (CPE) through the transfer of a phosphatidyl head group from cytidine 5'-diphosphate (CDP)-ethanolamine on to the primary hydroxyl of ceramide. The polypeptide is Ceramide phosphoethanolamine synthase (Drosophila melanogaster (Fruit fly)).